We begin with the raw amino-acid sequence, 564 residues long: Phomacin cluster regulator phmR (564 aa).

The zn(2)-C6 fungal-type DNA-binding region spans 33-64; the sequence is CDRCRGHKLRCIRDQMTVDSPCQRCRKAREKC. Disordered stretches follow at residues 68 to 93, 152 to 197, and 252 to 278; these read SSTRPVPARLNRSSQGHKLPGATSSA, DFAD…NPFL, and PIHPPTMASSHRTHSTASNDSSKDSTT. Polar residues-rich tracts occupy residues 182–192 and 258–278; these read ITPTSQGTTAV and MASSHRTHSTASNDSSKDSTT.

It is found in the nucleus. Its function is as follows. Transcription factor that specifically regulates the expression of the gene cluster that mediates the biosynthesis of the mycotoxins phomacins, leucine-derived cytochalasans with potent actin polymerization-inhibitory activities and monocot-specific antigerminative activities. This chain is Phomacin cluster regulator phmR, found in Phaeosphaeria nodorum (strain SN15 / ATCC MYA-4574 / FGSC 10173) (Glume blotch fungus).